Consider the following 808-residue polypeptide: Glycerol-3-phosphate acyltransferase (808 aa).

The HXXXXD motif motif lies at histidine 306–aspartate 311.

Belongs to the GPAT/DAPAT family.

It is found in the cell inner membrane. The enzyme catalyses sn-glycerol 3-phosphate + an acyl-CoA = a 1-acyl-sn-glycero-3-phosphate + CoA. The protein operates within phospholipid metabolism; CDP-diacylglycerol biosynthesis; CDP-diacylglycerol from sn-glycerol 3-phosphate: step 1/3. This is Glycerol-3-phosphate acyltransferase from Vibrio parahaemolyticus serotype O3:K6 (strain RIMD 2210633).